The chain runs to 660 residues: MTNIIELPEVLANQIAAGEVVERPASVVKELVENAIDAKSSQITVEIEESGLKMIQVTDNGEGMSHEDLPLSLRRHATSKIKSQSDLFRIRTLGFRGEALPSVASISKITIKTATKEVTHGSLLIATGGEIETLEAISTPTGTKIKVENLFYNTPARLKYMKSLQAELAHIVDVVNRLSLAHPEVAFTLISDGRQLTQTSGTGDLRQAIAGIYGLNTTKKMLAISNADLDFEVSGYVSLPELTRANRNYMTILVNGRYIKNFLLNRAILDGYGSKLMVGRFPIVVIDIQIDPYLADVNVHPTKQEVRISKERELMALISTAISESLKEQDLIPDALENLAKSSTRHFSKPEQTQLPLQSRGLYYDPQKNDFFVKESAVSEKIPETDFYFGAVDNSVKVEKAELLPHSEEVIGPSSVKHASRPQNTFTETDHPNLDLKNRQKLSQMLNRLENEEKSVFPELDYFGQMHGTYLFAQGKDGLFIIDQHAAQERVKYEYYRDKIGEVDSSLQQLLVPYLFEFSGSDFINLQEKMALLNEVGIFLEVYGHNTFILREHPIWMKEEEIASGVYEMCDMLLLTNEVSIKTYRAELAIMMSCKRSIKANHSLDDYSARNLLLQLAQCQNPYNCPHGRPVLINFSKADMEKMFRRIQENHTSLRELGKY.

The tract at residues 414 to 433 is disordered; sequence SSVKHASRPQNTFTETDHPN.

It belongs to the DNA mismatch repair MutL/HexB family.

In terms of biological role, this protein is involved in the repair of mismatches in DNA. It is required for dam-dependent methyl-directed DNA mismatch repair. May act as a 'molecular matchmaker', a protein that promotes the formation of a stable complex between two or more DNA-binding proteins in an ATP-dependent manner without itself being part of a final effector complex. The sequence is that of DNA mismatch repair protein MutL from Streptococcus pyogenes serotype M6 (strain ATCC BAA-946 / MGAS10394).